The sequence spans 507 residues: Putative propionyl-CoA carboxylase beta chain (507 aa).

Residues Met-1–Ala-25 are compositionally biased toward basic and acidic residues. Residues Met-1 to Lys-30 form a disordered region. The CoA carboxyltransferase N-terminal domain maps to Met-1–Glu-254. The tract at residues Met-1–Lys-501 is carboxyltransferase. Residues Glu-256–Lys-501 enclose the CoA carboxyltransferase C-terminal domain.

It belongs to the AccD/PCCB family. As to quaternary structure, probably a dodecamer composed of six biotin-containing alpha subunits and six beta subunits.

The catalysed reaction is propanoyl-CoA + hydrogencarbonate + ATP = (S)-methylmalonyl-CoA + ADP + phosphate + H(+). Its pathway is metabolic intermediate metabolism; propanoyl-CoA degradation; succinyl-CoA from propanoyl-CoA: step 1/3. The polypeptide is Putative propionyl-CoA carboxylase beta chain (yqjD) (Bacillus subtilis (strain 168)).